Consider the following 198-residue polypeptide: Linker for activation of T-cells family member 2 (198 aa).

Over 1 to 4 the chain is Extracellular; sequence MAQP. The chain crosses the membrane as a helical; Signal-anchor for type III membrane protein span at residues 5–24; sequence ELLWAAAGLMLLGVAVSACV. 2 S-palmitoyl cysteine lipidation sites follow: Cys23 and Cys26. The Cytoplasmic portion of the chain corresponds to 25-198; that stretch reads RCQLYATKRG…PTIDAVVLSK (174 aa). Phosphotyrosine is present on residues Tyr136, Tyr155, and Tyr184.

When phosphorylated, interacts with GRB2. In terms of processing, phosphorylated on tyrosines following cross-linking of BCR; which induces the recruitment of GRB2.

The protein resides in the cell membrane. Functionally, involved in BCR (B-cell antigen receptor)-mediated signaling in B-cells. May also be involved in FCER1 (high affinity immunoglobulin epsilon receptor)-mediated signaling in mast cells and FCGR1 (high affinity immunoglobulin gamma Fc receptor I)-mediated signaling in myeloid cells. Couples activation of these receptors and their associated kinases with distal intracellular events such as calcium mobilization through the recruitment of GRB2. The chain is Linker for activation of T-cells family member 2 (LAT2) from Gallus gallus (Chicken).